The primary structure comprises 279 residues: Ribosomal RNA small subunit methyltransferase A (279 aa).

5 residues coordinate S-adenosyl-L-methionine: leucine 42, glycine 67, glutamate 88, aspartate 113, and asparagine 129.

The protein belongs to the class I-like SAM-binding methyltransferase superfamily. rRNA adenine N(6)-methyltransferase family. RsmA subfamily.

The protein resides in the cytoplasm. The catalysed reaction is adenosine(1518)/adenosine(1519) in 16S rRNA + 4 S-adenosyl-L-methionine = N(6)-dimethyladenosine(1518)/N(6)-dimethyladenosine(1519) in 16S rRNA + 4 S-adenosyl-L-homocysteine + 4 H(+). In terms of biological role, specifically dimethylates two adjacent adenosines (A1518 and A1519) in the loop of a conserved hairpin near the 3'-end of 16S rRNA in the 30S particle. May play a critical role in biogenesis of 30S subunits. The chain is Ribosomal RNA small subunit methyltransferase A from Thermotoga maritima (strain ATCC 43589 / DSM 3109 / JCM 10099 / NBRC 100826 / MSB8).